The following is a 99-amino-acid chain: Nucleoid-associated protein SAG1747 (99 aa).

Low complexity predominate over residues 1 to 10 (MMNMQNMMRQ). The disordered stretch occupies residues 1–20 (MMNMQNMMRQAQKLQKQMEQ).

The protein belongs to the YbaB/EbfC family. As to quaternary structure, homodimer.

It localises to the cytoplasm. The protein resides in the nucleoid. Binds to DNA and alters its conformation. May be involved in regulation of gene expression, nucleoid organization and DNA protection. The chain is Nucleoid-associated protein SAG1747 from Streptococcus agalactiae serotype V (strain ATCC BAA-611 / 2603 V/R).